Consider the following 704-residue polypeptide: Elongation factor G (704 aa).

The tr-type G domain occupies 8-291 (DKVRNIGIMA…AVIDYLASPV (284 aa)). GTP-binding positions include 17-24 (AHIDAGKT), 90-94 (DTPGH), and 144-147 (NKMD).

This sequence belongs to the TRAFAC class translation factor GTPase superfamily. Classic translation factor GTPase family. EF-G/EF-2 subfamily.

It is found in the cytoplasm. In terms of biological role, catalyzes the GTP-dependent ribosomal translocation step during translation elongation. During this step, the ribosome changes from the pre-translocational (PRE) to the post-translocational (POST) state as the newly formed A-site-bound peptidyl-tRNA and P-site-bound deacylated tRNA move to the P and E sites, respectively. Catalyzes the coordinated movement of the two tRNA molecules, the mRNA and conformational changes in the ribosome. The sequence is that of Elongation factor G from Chlorobaculum parvum (strain DSM 263 / NCIMB 8327) (Chlorobium vibrioforme subsp. thiosulfatophilum).